Consider the following 129-residue polypeptide: MAFPTTSAQQAETNRKILEEIQTKKQLLAGGIINLGLSPPNQMPAPQLLGQPTTVNPDFQAGVGIATNATSTARSAFNPTSSTTLGFFIPQDSYFGNSFIPVLPRLEPLPSPATTPTTPNAPPSHSISK.

Positions 105 to 129 (RLEPLPSPATTPTTPNAPPSHSISK) are disordered.

It belongs to the SOSS-C family.

The protein is SOSS complex subunit C homolog of Drosophila simulans (Fruit fly).